The sequence spans 1306 residues: Kinesin-like protein KIN-14L (1306 aa).

Positions 142–456 constitute a Kinesin motor domain; the sequence is NVKVFCRSRP…LSFSARAKNA (315 aa). 223–230 is a binding site for ATP; sequence GQSRSGKT. Coiled-coil stretches lie at residues 466 to 507 and 540 to 595; these read IKKW…ANDQ and HRIE…ALNS. Composition is skewed to polar residues over residues 592–611 and 660–677; these read ALNS…SVIS and LGSS…TNAQ. Disordered regions lie at residues 592 to 627, 657 to 710, and 849 to 881; these read ALNS…SVTK, KSGL…SGAI, and KSHT…RTSL. Residues 855–867 are compositionally biased toward low complexity; it reads SRSSSRGSSPGRS.

Belongs to the TRAFAC class myosin-kinesin ATPase superfamily. Kinesin family. KIN-14 subfamily.

This chain is Kinesin-like protein KIN-14L, found in Oryza sativa subsp. japonica (Rice).